The chain runs to 487 residues: NADH-quinone oxidoreductase subunit N (487 aa).

Transmembrane regions (helical) follow at residues 8–28, 35–55, 78–98, 104–124, 125–145, 159–179, 203–223, 235–255, 271–291, 297–317, 328–348, 376–396, 409–428, and 451–471; these read LIAMLPLLIVGLTVVVVMLSI, FINATLTVIGLNLALLSLYFV, GLVIIASLATSTFAYPWLVGY, EFYLLVLIAALGGILLTSANH, LASLFLGIELLTLPLFGLIGY, YMLLSAAASSFLLFGMALLYA, ILAGLGMMIVGLGFKLSLVPF, PAPVSTFLATASKIAIFAVVM, LVLSIIAVASILFGNLMAISQ, LLGYSSIAHLGYLLIALVAVQ, IGVYLAGYLFSSLGAFGVVSL, AVMTVMMLSLAGIPMTLGFIG, LWWLTGAVVLGSAIGLYYYL, and ALTAGGVVVLISAILVLVLGI.

This sequence belongs to the complex I subunit 2 family. In terms of assembly, NDH-1 is composed of 13 different subunits. Subunits NuoA, H, J, K, L, M, N constitute the membrane sector of the complex.

Its subcellular location is the cell inner membrane. It catalyses the reaction a quinone + NADH + 5 H(+)(in) = a quinol + NAD(+) + 4 H(+)(out). In terms of biological role, NDH-1 shuttles electrons from NADH, via FMN and iron-sulfur (Fe-S) centers, to quinones in the respiratory chain. The immediate electron acceptor for the enzyme in this species is believed to be ubiquinone. Couples the redox reaction to proton translocation (for every two electrons transferred, four hydrogen ions are translocated across the cytoplasmic membrane), and thus conserves the redox energy in a proton gradient. This is NADH-quinone oxidoreductase subunit N from Yersinia pestis bv. Antiqua (strain Angola).